Reading from the N-terminus, the 127-residue chain is MFRTLLKSKIHRAAVTHCELNYEGSCAIDEDLLDAANLGENEQIHIWNINNGERFITYAIRAERGSRIISVNGSAARRAAVGDLVIIAAFAQVEEKEVAGFSPKLVFVNPDNRIKEERSTIPVQMAD.

The active-site Schiff-base intermediate with substrate; via pyruvic acid is Ser-25. Residue Ser-25 is modified to Pyruvic acid (Ser). Residue Thr-57 coordinates substrate. Residue Tyr-58 is the Proton donor of the active site. 73–75 (GSA) contacts substrate.

The protein belongs to the PanD family. Heterooctamer of four alpha and four beta subunits. The cofactor is pyruvate. Post-translationally, is synthesized initially as an inactive proenzyme, which is activated by self-cleavage at a specific serine bond to produce a beta-subunit with a hydroxyl group at its C-terminus and an alpha-subunit with a pyruvoyl group at its N-terminus.

The protein localises to the cytoplasm. It carries out the reaction L-aspartate + H(+) = beta-alanine + CO2. Its pathway is cofactor biosynthesis; (R)-pantothenate biosynthesis; beta-alanine from L-aspartate: step 1/1. Catalyzes the pyruvoyl-dependent decarboxylation of aspartate to produce beta-alanine. The chain is Aspartate 1-decarboxylase from Polaromonas naphthalenivorans (strain CJ2).